Reading from the N-terminus, the 744-residue chain is MASEGTNIPSPVVRQIDKQFLICSICLERYKNPKVLPCLHTFCERCLQNYIPAHSLTLSCPVCRQTSILPEKGVAALQNNFFITNLMDVLQRTPGSNAEESSILETVTAVAAGKPLSCPNHDGNVMEFYCQSCETAMCRECTEGEHAEHPTVPLKDVVEQHKASLQVQLDAVNKRLPEIDSALQFISEIIHQLTNQKASIVDDIHSTFDELQKTLNVRKSVLLMELEVNYGLKHKVLQSQLDTLLQGQESIKSCSNFTAQALNHGTETEVLLVKKQMSEKLNELADQDFPLHPRENDQLDFIVETEGLKKSIHNLGTILTTNAVASETVATGEGLRQTIIGQPMSVTITTKDKDGELCKTGNAYLTAELSTPDGSVADGEILDNKNGTYEFLYTVQKEGDFTLSLRLYDQHIRGSPFKLKVIRSADVSPTTEGVKRRVKSPGSGHVKQKAVKRPASMYSTGKRKENPIEDDLIFRVGTKGRNKGEFTNLQGVAASTNGKILIADSNNQCVQIFSNDGQFKSRFGIRGRSPGQLQRPTGVAVHPSGDIIIADYDNKWVSIFSSDGKFKTKIGSGKLMGPKGVSVDRNGHIIVVDNKACCVFIFQPNGKIVTRFGSRGNGDRQFAGPHFAAVNSNNEIIITDFHNHSVKVFNQEGEFMLKFGSNGEGNGQFNAPTGVAVDSNGNIIVADWGNSRIQVFDGSGSFLSYINTSADPLYGPQGLALTSDGHVVVADSGNHCFKVYRYLQ.

Serine 10 carries the post-translational modification Phosphoserine. An RING-type zinc finger spans residues 23 to 64 (CSICLERYKNPKVLPCLHTFCERCLQNYIPAHSLTLSCPVCR). A B box-type zinc finger spans residues 113 to 154 (GKPLSCPNHDGNVMEFYCQSCETAMCRECTEGEHAEHPTVPL). Zn(2+) is bound by residues cysteine 118, histidine 121, cysteine 141, and histidine 146. The Filamin repeat unit spans residues 320 to 421 (TTNAVASETV…IRGSPFKLKV (102 aa)). Threonine 371 is subject to Phosphothreonine. Serine 375, serine 424, and serine 428 each carry phosphoserine. Residues 432 to 462 (EGVKRRVKSPGSGHVKQKAVKRPASMYSTGK) are disordered. 6 NHL repeats span residues 473–516 (IFRV…FSND), 520–563 (KSRF…FSSD), 564–605 (GKFK…FQPN), 609–652 (VTRF…FNQE), 656–699 (MLKF…FDGS), and 700–743 (GSFL…YRYL).

It belongs to the TRIM/RBCC family. Forms homooligomers. Interacts with TRIM3; this interaction reduces TRIM2 activity. Interacts with myosin V; myosin V may not be a substrate for ubiquitination. Interacts with NEFL. Interacts with phosphorylated BCL2L11. Interacts with SIRPA. Post-translationally, RING-type zinc finger-dependent and UBE2D1-dependent autoubiquitination.

Its subcellular location is the cytoplasm. The catalysed reaction is S-ubiquitinyl-[E2 ubiquitin-conjugating enzyme]-L-cysteine + [acceptor protein]-L-lysine = [E2 ubiquitin-conjugating enzyme]-L-cysteine + N(6)-ubiquitinyl-[acceptor protein]-L-lysine.. The protein operates within protein modification; protein ubiquitination. Functionally, UBE2D1-dependent E3 ubiquitin-protein ligase that mediates the ubiquitination of NEFL and of phosphorylated BCL2L11. Plays a neuroprotective function. May play a role in neuronal rapid ischemic tolerance. Plays a role in antiviral immunity and limits New World arenavirus infection independently of its ubiquitin ligase activity. This chain is Tripartite motif-containing protein 2 (TRIM2), found in Homo sapiens (Human).